Here is a 62-residue protein sequence, read N- to C-terminus: Potassium channel toxin alpha-KTx Tx790 (62 aa).

The first 18 residues, 1-18 (MQKLFIVLVLFCILRLDA), serve as a signal peptide directing secretion. Intrachain disulfides connect Cys28/Cys46, Cys33/Cys59, and Cys37/Cys61.

It belongs to the short scorpion toxin superfamily. Potassium channel inhibitor family. Alpha-KTx 23 subfamily. Expressed by the venom gland.

The protein resides in the secreted. Its function is as follows. May block potassium channels. In Buthus israelis (Israeli scorpion), this protein is Potassium channel toxin alpha-KTx Tx790.